We begin with the raw amino-acid sequence, 252 residues long: Major prion protein (252 aa).

An N-terminal signal peptide occupies residues 1-22; that stretch reads MANLGCWMLVLFVATWSDLGLC. An interaction with ADGRG6 region spans residues 23-38; that stretch reads KKRPKPGGWNTGGSRY. Positions 23 to 229 are interaction with GRB2, ERI3 and SYN1; sequence KKRPKPGGWN…ESQAYYQRGS (207 aa). The disordered stretch occupies residues 26 to 106; it reads PKPGGWNTGG…QWNKPSKPKT (81 aa). Repeat copies occupy residues 51–58, 59–66, 67–74, 75–82, and 83–90. Positions 51-90 are 5 X 8 AA tandem repeats of P-H-G-G-G-W-G-Q; that stretch reads PQGGGWGQPHGGGWGQPHGGGWGQPHGGSWGQPHGGGWGQ. Residues 52–94 are compositionally biased toward gly residues; that stretch reads QGGGWGQPHGGGWGQPHGGGWGQPHGGSWGQPHGGGWGQGGGT. Cu(2+) contacts are provided by His60, Gly61, Gly62, His68, Gly69, Gly70, His76, Gly77, Gly78, His84, Gly85, and Gly86. A disulfide bond links Cys178 and Cys213. N-linked (GlcNAc...) asparagine glycans are attached at residues Asn180 and Asn196. A lipid anchor (GPI-anchor amidated serine) is attached at Ser229. The propeptide at 230–252 is removed in mature form; that stretch reads SMVLFSSPPVILLISFLIFLIVG.

This sequence belongs to the prion family. In terms of assembly, monomer and homodimer. Has a tendency to aggregate into amyloid fibrils containing a cross-beta spine, formed by a steric zipper of superposed beta-strands. Soluble oligomers may represent an intermediate stage on the path to fibril formation. Copper binding may promote oligomerization. Interacts with GRB2, APP, ERI3/PRNPIP and SYN1. Mislocalized cytosolically exposed PrP interacts with MGRN1; this interaction alters MGRN1 subcellular location and causes lysosomal enlargement. Interacts with APP. Interacts with KIAA1191. Interacts with ADGRG6.

It localises to the cell membrane. Its subcellular location is the golgi apparatus. In terms of biological role, its primary physiological function is unclear. May play a role in neuronal development and synaptic plasticity. May be required for neuronal myelin sheath maintenance. May promote myelin homeostasis through acting as an agonist for ADGRG6 receptor. May play a role in iron uptake and iron homeostasis. Soluble oligomers are toxic to cultured neuroblastoma cells and induce apoptosis (in vitro). Association with GPC1 (via its heparan sulfate chains) targets PRNP to lipid rafts. Also provides Cu(2+) or Zn(2+) for the ascorbate-mediated GPC1 deaminase degradation of its heparan sulfate side chains. The protein is Major prion protein (PRNP) of Sapajus apella (Brown-capped capuchin).